Reading from the N-terminus, the 224-residue chain is UPF0758 protein VP0184 (224 aa).

The MPN domain occupies 102–224; the sequence is ALTSPEQTKL…SVSFAERGWI (123 aa). Positions 173, 175, and 186 each coordinate Zn(2+). A JAMM motif motif is present at residues 173-186; it reads HNHPSGVAEPSQAD.

The protein belongs to the UPF0758 family.

The protein is UPF0758 protein VP0184 of Vibrio parahaemolyticus serotype O3:K6 (strain RIMD 2210633).